Consider the following 535-residue polypeptide: Bifunctional purine biosynthesis protein PurH (535 aa).

Positions 6-151 constitute an MGS-like domain; sequence TRLPVRRALI…KNHKDVAIVV (146 aa).

It belongs to the PurH family.

It carries out the reaction (6R)-10-formyltetrahydrofolate + 5-amino-1-(5-phospho-beta-D-ribosyl)imidazole-4-carboxamide = 5-formamido-1-(5-phospho-D-ribosyl)imidazole-4-carboxamide + (6S)-5,6,7,8-tetrahydrofolate. The enzyme catalyses IMP + H2O = 5-formamido-1-(5-phospho-D-ribosyl)imidazole-4-carboxamide. The protein operates within purine metabolism; IMP biosynthesis via de novo pathway; 5-formamido-1-(5-phospho-D-ribosyl)imidazole-4-carboxamide from 5-amino-1-(5-phospho-D-ribosyl)imidazole-4-carboxamide (10-formyl THF route): step 1/1. It functions in the pathway purine metabolism; IMP biosynthesis via de novo pathway; IMP from 5-formamido-1-(5-phospho-D-ribosyl)imidazole-4-carboxamide: step 1/1. The chain is Bifunctional purine biosynthesis protein PurH from Pseudomonas putida (strain ATCC 700007 / DSM 6899 / JCM 31910 / BCRC 17059 / LMG 24140 / F1).